The sequence spans 131 residues: Profilin-1 (131 aa).

This sequence belongs to the profilin family. Occurs in many kinds of cells as a complex with monomeric actin in a 1:1 ratio.

It localises to the cytoplasm. The protein resides in the cytoskeleton. Its function is as follows. Binds to actin and affects the structure of the cytoskeleton. At high concentrations, profilin prevents the polymerization of actin, whereas it enhances it at low concentrations. By binding to PIP2, it inhibits the formation of IP3 and DG. This chain is Profilin-1 (PRO1), found in Triticum aestivum (Wheat).